We begin with the raw amino-acid sequence, 208 residues long: Adenylyl-sulfate kinase 3 (208 aa).

37 to 45 (GLSGSGKST) contacts ATP. Residues Asp-67, Arg-70, Arg-84, Asn-87, 110-111 (IS), and Gly-160 each bind substrate. The active-site Phosphoserine intermediate is Ser-111.

Belongs to the APS kinase family. In terms of tissue distribution, expressed in root vasculature, root tips, leaf epidermal and guard cells, pollen grains and radicle of immature seeds.

Its subcellular location is the cytoplasm. It localises to the cytosol. The enzyme catalyses adenosine 5'-phosphosulfate + ATP = 3'-phosphoadenylyl sulfate + ADP + H(+). The protein operates within sulfur metabolism; hydrogen sulfide biosynthesis; sulfite from sulfate: step 2/3. In terms of biological role, catalyzes the synthesis of activated sulfate for the sulfation of secondary metabolites, including the glucosinolates. Essential for plant reproduction and viability. The chain is Adenylyl-sulfate kinase 3 from Arabidopsis thaliana (Mouse-ear cress).